A 593-amino-acid polypeptide reads, in one-letter code: DNA primase (593 aa).

The CHC2-type zinc finger occupies 40–64 (CPFHHEKTPSFTVSQKKQFYHCFGC). Residues 260–342 (KQLLVVEGYM…GRQLKFIFLP (83 aa)) enclose the Toprim domain. Positions 266, 310, and 312 each coordinate Mg(2+).

It belongs to the DnaG primase family. Monomer. Interacts with DnaB. Zn(2+) serves as cofactor. Mg(2+) is required as a cofactor.

The catalysed reaction is ssDNA + n NTP = ssDNA/pppN(pN)n-1 hybrid + (n-1) diphosphate.. In terms of biological role, RNA polymerase that catalyzes the synthesis of short RNA molecules used as primers for DNA polymerase during DNA replication. The protein is DNA primase of Haemophilus influenzae (strain ATCC 51907 / DSM 11121 / KW20 / Rd).